The following is a 192-amino-acid chain: MGQHEVTARLSELTNTFIERHHSSSRQRPCIPLNEDTRYMLDSPCVEHVDEEAGVFYWTPRPHMDFTLFDGLEQGLEVAIHPSITAFYGSYWSDGLWCSSPFGEISLIQLWNEDDMETLRENLLGHAFQKSKRRQGLTFFIGLTADDRIVTVDNHSGEVYLEEAGRPPQRTLAASLGELLRELEPTLTPYTG.

Belongs to the Syd family.

Its subcellular location is the cell inner membrane. In terms of biological role, interacts with the SecY protein in vivo. May bind preferentially to an uncomplexed state of SecY, thus functioning either as a chelating agent for excess SecY in the cell or as a regulatory factor that negatively controls the translocase function. The sequence is that of Protein Syd from Hahella chejuensis (strain KCTC 2396).